Consider the following 307-residue polypeptide: uncharacterized protein (307 aa).

Residues 1-25 form the signal peptide; the sequence is MKFQKRNIQLVLILLLILNNCFINS. The interval 60–90 is disordered; sequence ENNNKNNNNNNNNNNNNNNNNKNSKVKNDDS. Residues 63 to 82 show a composition bias toward low complexity; the sequence is NKNNNNNNNNNNNNNNNNKN. 2 N-linked (GlcNAc...) asparagine glycosylation sites follow: asparagine 124 and asparagine 173. Transmembrane regions (helical) follow at residues 244–264 and 275–295; these read IIFA…YYLA and IIGV…TIVI.

It localises to the membrane. This is an uncharacterized protein from Dictyostelium discoideum (Social amoeba).